The chain runs to 170 residues: Putative phosphoesterase OB1230 (170 aa).

Residue histidine 34 is the Proton donor of the active site. Short sequence motifs (HXTX) lie at residues 34 to 37 and 115 to 118; these read HLTL and HITI. The active-site Proton acceptor is the histidine 115.

It belongs to the 2H phosphoesterase superfamily. YjcG family.

The polypeptide is Putative phosphoesterase OB1230 (Oceanobacillus iheyensis (strain DSM 14371 / CIP 107618 / JCM 11309 / KCTC 3954 / HTE831)).